A 117-amino-acid polypeptide reads, in one-letter code: Swarming motility protein SwrAA (117 aa).

It is found in the cytoplasm. In terms of biological role, required for swarm cell differentiation. Plays a crucial role in regulating the degree of cell flagellation. This chain is Swarming motility protein SwrAA (swrAA), found in Bacillus subtilis (strain 168).